We begin with the raw amino-acid sequence, 344 residues long: tRNA N6-adenosine threonylcarbamoyltransferase (344 aa).

Fe cation-binding residues include His119 and His123. Substrate-binding positions include 141–145 (VVSGG), Asp174, Gly187, Asp191, and Asn280. Asp310 lines the Fe cation pocket.

Belongs to the KAE1 / TsaD family. Fe(2+) serves as cofactor.

The protein localises to the cytoplasm. The catalysed reaction is L-threonylcarbamoyladenylate + adenosine(37) in tRNA = N(6)-L-threonylcarbamoyladenosine(37) in tRNA + AMP + H(+). Its function is as follows. Required for the formation of a threonylcarbamoyl group on adenosine at position 37 (t(6)A37) in tRNAs that read codons beginning with adenine. Is involved in the transfer of the threonylcarbamoyl moiety of threonylcarbamoyl-AMP (TC-AMP) to the N6 group of A37, together with TsaE and TsaB. TsaD likely plays a direct catalytic role in this reaction. The chain is tRNA N6-adenosine threonylcarbamoyltransferase from Listeria innocua serovar 6a (strain ATCC BAA-680 / CLIP 11262).